A 145-amino-acid chain; its full sequence is D-aminoacyl-tRNA deacylase (145 aa).

The short motif at 137-138 (GP) is the Gly-cisPro motif, important for rejection of L-amino acids element.

This sequence belongs to the DTD family. Homodimer.

It is found in the cytoplasm. The catalysed reaction is glycyl-tRNA(Ala) + H2O = tRNA(Ala) + glycine + H(+). It carries out the reaction a D-aminoacyl-tRNA + H2O = a tRNA + a D-alpha-amino acid + H(+). An aminoacyl-tRNA editing enzyme that deacylates mischarged D-aminoacyl-tRNAs. Also deacylates mischarged glycyl-tRNA(Ala), protecting cells against glycine mischarging by AlaRS. Acts via tRNA-based rather than protein-based catalysis; rejects L-amino acids rather than detecting D-amino acids in the active site. By recycling D-aminoacyl-tRNA to D-amino acids and free tRNA molecules, this enzyme counteracts the toxicity associated with the formation of D-aminoacyl-tRNA entities in vivo and helps enforce protein L-homochirality. The chain is D-aminoacyl-tRNA deacylase from Salmonella typhi.